Here is a 271-residue protein sequence, read N- to C-terminus: uncharacterized protein (271 aa).

Belongs to the HAD-like hydrolase superfamily.

This is an uncharacterized protein from Staphylococcus aureus (strain Mu50 / ATCC 700699).